A 151-amino-acid polypeptide reads, in one-letter code: Putative pre-16S rRNA nuclease (151 aa).

This sequence belongs to the YqgF nuclease family.

It is found in the cytoplasm. Could be a nuclease involved in processing of the 5'-end of pre-16S rRNA. The sequence is that of Putative pre-16S rRNA nuclease from Onion yellows phytoplasma (strain OY-M).